The chain runs to 381 residues: Succinyl-diaminopimelate desuccinylase (381 aa).

A Zn(2+)-binding site is contributed by H71. Residue D73 is part of the active site. D104 lines the Zn(2+) pocket. The active-site Proton acceptor is E138. Positions 139, 167, and 353 each coordinate Zn(2+).

It belongs to the peptidase M20A family. DapE subfamily. In terms of assembly, homodimer. The cofactor is Zn(2+). Co(2+) is required as a cofactor.

The catalysed reaction is N-succinyl-(2S,6S)-2,6-diaminopimelate + H2O = (2S,6S)-2,6-diaminopimelate + succinate. It functions in the pathway amino-acid biosynthesis; L-lysine biosynthesis via DAP pathway; LL-2,6-diaminopimelate from (S)-tetrahydrodipicolinate (succinylase route): step 3/3. In terms of biological role, catalyzes the hydrolysis of N-succinyl-L,L-diaminopimelic acid (SDAP), forming succinate and LL-2,6-diaminopimelate (DAP), an intermediate involved in the bacterial biosynthesis of lysine and meso-diaminopimelic acid, an essential component of bacterial cell walls. This chain is Succinyl-diaminopimelate desuccinylase, found in Shewanella pealeana (strain ATCC 700345 / ANG-SQ1).